The sequence spans 369 residues: ATP-dependent 6-phosphofructokinase (369 aa).

ATP is bound by residues Gly15, 81–82, and 108–111; these read KG and GDGS. Asp109 contributes to the Mg(2+) binding site. Substrate is bound by residues 132 to 134, Arg169, 176 to 178, Glu230, Arg266, and 272 to 275; these read TID, MGR, and HIQR. Asp134 acts as the Proton acceptor in catalysis.

It belongs to the phosphofructokinase type A (PFKA) family. Mixed-substrate PFK group III subfamily. In terms of assembly, homodimer or homotetramer. Requires Mg(2+) as cofactor.

It localises to the cytoplasm. It catalyses the reaction beta-D-fructose 6-phosphate + ATP = beta-D-fructose 1,6-bisphosphate + ADP + H(+). It participates in carbohydrate degradation; glycolysis; D-glyceraldehyde 3-phosphate and glycerone phosphate from D-glucose: step 3/4. Catalyzes the phosphorylation of D-fructose 6-phosphate to fructose 1,6-bisphosphate by ATP, the first committing step of glycolysis. The sequence is that of ATP-dependent 6-phosphofructokinase from Thermosynechococcus vestitus (strain NIES-2133 / IAM M-273 / BP-1).